The chain runs to 165 residues: Phosphopantetheine adenylyltransferase (165 aa).

Thr-9 serves as a coordination point for substrate. Residues 9–10 (TF) and His-17 each bind ATP. Residues Lys-41, Leu-73, and Arg-87 each contribute to the substrate site. Residues 88 to 90 (GLR), Glu-98, and 123 to 129 (YMFISAT) each bind ATP.

Belongs to the bacterial CoaD family. As to quaternary structure, homohexamer. Mg(2+) serves as cofactor.

It is found in the cytoplasm. The enzyme catalyses (R)-4'-phosphopantetheine + ATP + H(+) = 3'-dephospho-CoA + diphosphate. It functions in the pathway cofactor biosynthesis; coenzyme A biosynthesis; CoA from (R)-pantothenate: step 4/5. In terms of biological role, reversibly transfers an adenylyl group from ATP to 4'-phosphopantetheine, yielding dephospho-CoA (dPCoA) and pyrophosphate. In Nitrosospira multiformis (strain ATCC 25196 / NCIMB 11849 / C 71), this protein is Phosphopantetheine adenylyltransferase.